The sequence spans 115 residues: NADH-ubiquinone oxidoreductase chain 3 (115 aa).

Helical transmembrane passes span 4–24 (LMVMLVNITLSSCLIMIAFWL), 55–75 (FFLVAITFFLFDLEIALLLPL), and 87–107 (MMLTAFILVSVLALGLAYEWM).

It belongs to the complex I subunit 3 family. Core subunit of respiratory chain NADH dehydrogenase (Complex I) which is composed of 45 different subunits. Interacts with TMEM186. Interacts with TMEM242.

It is found in the mitochondrion inner membrane. The enzyme catalyses a ubiquinone + NADH + 5 H(+)(in) = a ubiquinol + NAD(+) + 4 H(+)(out). Its function is as follows. Core subunit of the mitochondrial membrane respiratory chain NADH dehydrogenase (Complex I) which catalyzes electron transfer from NADH through the respiratory chain, using ubiquinone as an electron acceptor. Essential for the catalytic activity of complex I. The polypeptide is NADH-ubiquinone oxidoreductase chain 3 (Peromyscus mexicanus (Mexican deer mouse)).